Consider the following 154-residue polypeptide: CASP-like protein 5B2 (154 aa).

The Cytoplasmic portion of the chain corresponds to 1-10 (MKKLLGGPGT). A helical membrane pass occupies residues 11-31 (VCGLLLRIGQCASAAASIGVM). Over 32–42 (VSAKEFSVHTA) the chain is Extracellular. Residues 43–63 (FCYLIASMGLQLLWSFGLACL) form a helical membrane-spanning segment. The Cytoplasmic segment spans residues 64-77 (DVYALRGKKDLQNP). Residues 78 to 98 (ILVSLFVVGDWVTAMLSLAAA) form a helical membrane-spanning segment. At 99–129 (CSSAGVVVLYEKDIKYCNTQSQYPCLRYEVA) the chain is on the extracellular side. Residues 130–150 (VALSFVTWIQIAVSSHVTFWI) form a helical membrane-spanning segment. Topologically, residues 151-154 (LASV) are cytoplasmic.

This sequence belongs to the Casparian strip membrane proteins (CASP) family. Homodimer and heterodimers. As to expression, expressed in the stele of the root.

The protein localises to the cell membrane. The protein is CASP-like protein 5B2 of Arabidopsis thaliana (Mouse-ear cress).